A 1254-amino-acid chain; its full sequence is Juxtamembrane domain-associated catenin (1254 aa).

Disordered regions lie at residues 1 to 38, 84 to 106, and 145 to 209; these read MISSGWMQEMEPIPEEGTEADGSEWGAMSDTAKRTMRK, AGPTSARGSSYSYSYESHYDNPP, and PYSN…SAPG. Over residues 12–22 the composition is skewed to acidic residues; sequence PIPEEGTEADG. A compositionally biased stretch (polar residues) spans 145 to 157; that stretch reads PYSNIDFDSSGLP. Fibronectin type-III domains are found at residues 207–302, 315–411, 428–518, and 530–624; these read APGV…IPIS, APGR…IRPA, PPGQ…LRPT, and ILEA…IEPS. The interval 412 to 433 is disordered; it reads APQRHVPARKVSESVQPPGQPQ. The tract at residues 662-685 is disordered; it reads MVRESPPLPERDDSPPPLRRANNN. 5 ARM repeats span residues 733-775, 777-820, 874-922, 969-1012, and 1016-1058; these read GGIP…AVME, DGVR…ESAT, NLIE…YDPA, HVVK…RAAV, and KGLP…KYAL. Residues 920 to 960 form a disordered region; it reads DPAAAHSSSSKNMKHVASPKPEKKKKDKEKKKDKNPKNIVT. The interval 1159–1254 is disordered; that stretch reads GTARRGDSST…GGGNIDDSWV (96 aa). Residues 1166–1176 are compositionally biased toward polar residues; that stretch reads SSTLARPISSQ. Over residues 1177-1187 the composition is skewed to basic and acidic residues; it reads GRERPSMHQLD.

This sequence belongs to the beta-catenin family. As to quaternary structure, associated with the catenin-cadherin complex consisting of hmr-1, hmp-1 and hmp-2. Interacts with hmr-1. Interacts with picc-1. Epidermal cells.

Its subcellular location is the cell junction. The protein localises to the adherens junction. It localises to the nucleus. May act as a positive modulator of hmr-1 function during epidermal morphogenesis. Required for proper localization of other junctional components, such as pac-1. This is Juxtamembrane domain-associated catenin (jac-1) from Caenorhabditis elegans.